Reading from the N-terminus, the 211-residue chain is MEMIGGDDTDTEMYGALVTAQSLRLRHLHHCRENQCTSVLVKYIQAPVHLVWSLVRRFDQPQKYKPFISRCTVNGDPEIGCLREVNVKSGLPATTSTERLEQLDDEEHILGINIIGGDHRLKNYSSILTVHPEMIDGRSGTMVMESFVVDVPQGNTKDDTCYFVESLIKCNLKSLACVSERLAAQDITNSIATFCNASNGYREKNHTETNL.

Positions 29–180 are START-like; sequence HHCRENQCTS…NLKSLACVSE (152 aa). 2 cysteine pairs are disulfide-bonded: cysteine 31–cysteine 161 and cysteine 36–cysteine 161. Residues lysine 65, 93–98, 120–126, and glutamate 145 contribute to the abscisate site; these read ATTSTE and RLKNYSS. Residues 89 to 93 carry the Gate loop motif; that stretch reads SGLPA. Residues 119 to 121 carry the Latch loop motif; it reads HRL.

Belongs to the PYR/PYL/RCAR abscisic acid intracellular receptor family. In terms of assembly, homodimer. Binds ABA on one subunit only. Binds to CARs protein in an ABA-independent manner, both at the plasma membrane and in the nucleus. Interacts with ABI1, and possibly with other PP2Cs.

It localises to the cytoplasm. The protein localises to the nucleus. The protein resides in the cell membrane. In terms of biological role, receptor for abscisic acid (ABA) required for ABA-mediated responses such as stomatal closure and germination inhibition. Inhibits the activity of group-A protein phosphatases type 2C (PP2Cs) when activated by ABA. The polypeptide is Abscisic acid receptor PYL7 (PYL7) (Arabidopsis thaliana (Mouse-ear cress)).